We begin with the raw amino-acid sequence, 439 residues long: Trigger factor (439 aa).

A PPIase FKBP-type domain is found at G162–P247.

This sequence belongs to the FKBP-type PPIase family. Tig subfamily.

The protein localises to the cytoplasm. The catalysed reaction is [protein]-peptidylproline (omega=180) = [protein]-peptidylproline (omega=0). Its function is as follows. Involved in protein export. Acts as a chaperone by maintaining the newly synthesized protein in an open conformation. Functions as a peptidyl-prolyl cis-trans isomerase. This Dichelobacter nodosus (strain VCS1703A) protein is Trigger factor.